A 396-amino-acid polypeptide reads, in one-letter code: Acetate kinase (396 aa).

Mg(2+) is bound at residue asparagine 7. Lysine 14 serves as a coordination point for ATP. Residue arginine 89 coordinates substrate. The active-site Proton donor/acceptor is aspartate 146. ATP contacts are provided by residues 206–210 (HLGNG), 280–282 (DLR), and 328–332 (GIGEN). Glutamate 382 lines the Mg(2+) pocket.

Belongs to the acetokinase family. In terms of assembly, homodimer. It depends on Mg(2+) as a cofactor. Requires Mn(2+) as cofactor.

It localises to the cytoplasm. The enzyme catalyses acetate + ATP = acetyl phosphate + ADP. Its pathway is metabolic intermediate biosynthesis; acetyl-CoA biosynthesis; acetyl-CoA from acetate: step 1/2. In terms of biological role, catalyzes the formation of acetyl phosphate from acetate and ATP. Can also catalyze the reverse reaction. In Maridesulfovibrio salexigens (strain ATCC 14822 / DSM 2638 / NCIMB 8403 / VKM B-1763) (Desulfovibrio salexigens), this protein is Acetate kinase.